The primary structure comprises 37 residues: DCVGESQQCADWAGPHCCDGYYCTCRYFPKCICVNNN.

Cystine bridges form between cysteine 2–cysteine 18, cysteine 9–cysteine 23, cysteine 17–cysteine 33, and cysteine 25–cysteine 31. An Asparagine amide modification is found at asparagine 37.

Belongs to the neurotoxin 07 (Beta/delta-agtx) family. 03 (aga-4) subfamily. Aga sub-subfamily. As to expression, expressed by the venom gland.

Its subcellular location is the secreted. Insecticidal neurotoxin that induces an irreversible spastic paralysis when injected into insects. Modifies presynaptic voltage-gated sodium channels (Nav), causing them to open at the normal resting potential of the nerve. This leads to spontaneous release of neurotransmitter and repetitive action potentials in motor neurons. The protein is Mu-agatoxin-Aa1f of Agelenopsis aperta (North American funnel-web spider).